The chain runs to 87 residues: MDPVDPNLEPWNHPGSQPRTPCNKCYCKKCCYHCQMCFITKGLGISYGRKKRRQRRRPPQGNQAHQDPLPEQPSSQHRGDHPTGPKE.

The tract at residues 1–21 (MDPVDPNLEPWNHPGSQPRTP) is disordered. The interval 1-24 (MDPVDPNLEPWNHPGSQPRTPCNK) is interaction with human CREBBP. Residues 1-48 (MDPVDPNLEPWNHPGSQPRTPCNKCYCKKCCYHCQMCFITKGLGISYG) form a transactivation region. Positions 22, 25, and 27 each coordinate Zn(2+). Positions 22-37 (CNKCYCKKCCYHCQMC) are cysteine-rich. N6-acetyllysine; by host PCAF is present on lysine 28. Zn(2+) contacts are provided by cysteine 30, histidine 33, cysteine 34, and cysteine 37. The segment at 38 to 48 (FITKGLGISYG) is core. Positions 45 to 87 (ISYGRKKRRQRRRPPQGNQAHQDPLPEQPSSQHRGDHPTGPKE) are disordered. Residues 48-58 (GRKKRRQRRRP) are compositionally biased toward basic residues. A Nuclear localization signal, RNA-binding (TAR), and protein transduction motif is present at residues 49-57 (RKKRRQRRR). The interaction with the host capping enzyme RNGTT stretch occupies residues 49–87 (RKKRRQRRRPPQGNQAHQDPLPEQPSSQHRGDHPTGPKE). N6-acetyllysine; by host EP300 and GCN5L2 is present on residues lysine 50 and lysine 51. Residues arginine 52 and arginine 53 each carry the asymmetric dimethylarginine; by host PRMT6 modification. Basic and acidic residues predominate over residues 77–87 (HRGDHPTGPKE). The Cell attachment site signature appears at 78–80 (RGD).

The protein belongs to the lentiviruses Tat family. In terms of assembly, interacts with host CCNT1. Associates with the P-TEFb complex composed at least of Tat, P-TEFb (CDK9 and CCNT1), TAR RNA, RNA Pol II. Recruits the HATs CREBBP, TAF1/TFIID, EP300, PCAF and GCN5L2. Interacts with host KAT5/Tip60; this interaction targets the latter to degradation. Interacts with the host deacetylase SIRT1. Interacts with host capping enzyme RNGTT; this interaction stimulates RNGTT. Binds to host KDR, and to the host integrins ITGAV/ITGB3 and ITGA5/ITGB1. Interacts with host KPNB1/importin beta-1 without previous binding to KPNA1/importin alpha-1. Interacts with EIF2AK2. Interacts with host nucleosome assembly protein NAP1L1; this interaction may be required for the transport of Tat within the nucleus, since the two proteins interact at the nuclear rim. Interacts with host C1QBP/SF2P32; this interaction involves lysine-acetylated Tat. Interacts with the host chemokine receptors CCR2, CCR3 and CXCR4. Interacts with host DPP4/CD26; this interaction may trigger an anti-proliferative effect. Interacts with host LDLR. Interacts with the host extracellular matrix metalloproteinase MMP1. Interacts with host PRMT6; this interaction mediates Tat's methylation. Interacts with, and is ubiquitinated by MDM2/Hdm2. Interacts with host PSMC3 and HTATIP2. Interacts with STAB1; this interaction may overcome SATB1-mediated repression of IL2 and IL2RA (interleukin) in T cells by binding to the same domain than HDAC1. Interacts (when acetylated) with human CDK13, thereby increasing HIV-1 mRNA splicing and promoting the production of the doubly spliced HIV-1 protein Nef. Interacts with host TBP; this interaction modulates the activity of transcriptional pre-initiation complex. Interacts with host RELA. Interacts with host PLSCR1; this interaction negatively regulates Tat transactivation activity by altering its subcellular distribution. In terms of processing, asymmetrical arginine methylation by host PRMT6 seems to diminish the transactivation capacity of Tat and affects the interaction with host CCNT1. Acetylation by EP300, CREBBP, GCN5L2/GCN5 and PCAF regulates the transactivation activity of Tat. EP300-mediated acetylation of Lys-50 promotes dissociation of Tat from the TAR RNA through the competitive binding to PCAF's bromodomain. In addition, the non-acetylated Tat's N-terminus can also interact with PCAF. PCAF-mediated acetylation of Lys-28 enhances Tat's binding to CCNT1. Lys-50 is deacetylated by SIRT1. Post-translationally, polyubiquitination by host MDM2 does not target Tat to degradation, but activates its transactivation function and fosters interaction with CCNT1 and TAR RNA. In terms of processing, phosphorylated by EIF2AK2 on serine and threonine residues adjacent to the basic region important for TAR RNA binding and function. Phosphorylation of Tat by EIF2AK2 is dependent on the prior activation of EIF2AK2 by dsRNA.

The protein resides in the host nucleus. The protein localises to the host nucleolus. Its subcellular location is the host cytoplasm. It localises to the secreted. Transcriptional activator that increases RNA Pol II processivity, thereby increasing the level of full-length viral transcripts. Recognizes a hairpin structure at the 5'-LTR of the nascent viral mRNAs referred to as the transactivation responsive RNA element (TAR) and recruits the cyclin T1-CDK9 complex (P-TEFb complex) that will in turn hyperphosphorylate the RNA polymerase II to allow efficient elongation. The CDK9 component of P-TEFb and other Tat-activated kinases hyperphosphorylate the C-terminus of RNA Pol II that becomes stabilized and much more processive. Other factors such as HTATSF1/Tat-SF1, SUPT5H/SPT5, and HTATIP2 are also important for Tat's function. Besides its effect on RNA Pol II processivity, Tat induces chromatin remodeling of proviral genes by recruiting the histone acetyltransferases (HATs) CREBBP, EP300 and PCAF to the chromatin. This also contributes to the increase in proviral transcription rate, especially when the provirus integrates in transcriptionally silent region of the host genome. To ensure maximal activation of the LTR, Tat mediates nuclear translocation of NF-kappa-B by interacting with host RELA. Through its interaction with host TBP, Tat may also modulate transcription initiation. Tat can reactivate a latently infected cell by penetrating in it and transactivating its LTR promoter. In the cytoplasm, Tat is thought to act as a translational activator of HIV-1 mRNAs. In terms of biological role, extracellular circulating Tat can be endocytosed by surrounding uninfected cells via the binding to several surface receptors such as CD26, CXCR4, heparan sulfate proteoglycans (HSPG) or LDLR. Neurons are rarely infected, but they internalize Tat via their LDLR. Through its interaction with nuclear HATs, Tat is potentially able to control the acetylation-dependent cellular gene expression. Modulates the expression of many cellular genes involved in cell survival, proliferation or in coding for cytokines or cytokine receptors. Tat plays a role in T-cell and neurons apoptosis. Tat induced neurotoxicity and apoptosis probably contribute to neuroAIDS. Circulating Tat also acts as a chemokine-like and/or growth factor-like molecule that binds to specific receptors on the surface of the cells, affecting many cellular pathways. In the vascular system, Tat binds to ITGAV/ITGB3 and ITGA5/ITGB1 integrins dimers at the surface of endothelial cells and competes with bFGF for heparin-binding sites, leading to an excess of soluble bFGF. In Homo sapiens (Human), this protein is Protein Tat.